The following is a 369-amino-acid chain: Putative 2-aminoethylphosphonate import ATP-binding protein PhnT (369 aa).

In terms of domain architecture, ABC transporter spans 19-250 (IVLDSLRVAY…PPNRFAAEFL (232 aa)). Residue 51-58 (GPSGSGKT) coordinates ATP.

The protein belongs to the ABC transporter superfamily. 2-aminoethylphosphonate importer (TC 3.A.1.11.5) family.

It is found in the cell inner membrane. In terms of biological role, probably part of the PhnSTUV complex (TC 3.A.1.11.5) involved in 2-aminoethylphosphonate import. Probably responsible for energy coupling to the transport system. The sequence is that of Putative 2-aminoethylphosphonate import ATP-binding protein PhnT (phnT) from Salmonella typhi.